A 931-amino-acid polypeptide reads, in one-letter code: Histone-lysine N-methyltransferase EZ1 (931 aa).

Over residues 1 to 30 (MEAEAAAAVVASSASASASAGRSRPSSSAA) the composition is skewed to low complexity. Disordered stretches follow at residues 1-37 (MEAEAAAAVVASSASASASAGRSRPSSSAAQVTSNSA), 372-450 (PTHS…ITNR), and 491-549 (RNGN…YDSS). The segment covering 375–385 (SSDNVMNQPGS) has biased composition (polar residues). A compositionally biased stretch (basic residues) spans 386-398 (NRKKNGSSGRKTK). Polar residues predominate over residues 423–433 (SNKSPQHSPSP). Residues 500–509 (SSQQSSPSTR) are compositionally biased toward low complexity. Residues 528-549 (AHNDSTEEANNRHSATDGYDSS) are compositionally biased toward basic and acidic residues. In terms of domain architecture, SANT spans 565–615 (YLRSWKAIEQGLLVKGLEIFGRNSCLIARNLLGGMKTCKDVFQYMNYIENN). Positions 664–763 (FKRITERKDQ…TLGVPNQRGD (100 aa)) constitute a CXC domain. In terms of domain architecture, SET spans 778–893 (QRVLLGRSDV…AGEELFYDYR (116 aa)). Residues 903–915 (ARKPEASGAKDDG) are compositionally biased toward basic and acidic residues. Residues 903-931 (ARKPEASGAKDDGQPFNGRAKKLAQNNRG) are disordered.

This sequence belongs to the class V-like SAM-binding methyltransferase superfamily. Histone-lysine methyltransferase family. EZ subfamily. As to expression, widely expressed.

It is found in the nucleus. The enzyme catalyses L-lysyl(27)-[histone H3] + 3 S-adenosyl-L-methionine = N(6),N(6),N(6)-trimethyl-L-lysyl(27)-[histone H3] + 3 S-adenosyl-L-homocysteine + 3 H(+). In terms of biological role, polycomb group (PcG) protein. Catalytic subunit of some PcG multiprotein complex, which methylates 'Lys-27' of histone H3, leading to transcriptional repression of the affected target genes. PcG proteins are not required to initiate repression, but to maintain it during later stages of development. This Zea mays (Maize) protein is Histone-lysine N-methyltransferase EZ1 (EZ1).